We begin with the raw amino-acid sequence, 95 residues long: Aspartyl/glutamyl-tRNA(Asn/Gln) amidotransferase subunit C (95 aa).

Belongs to the GatC family. As to quaternary structure, heterotrimer of A, B and C subunits.

The enzyme catalyses L-glutamyl-tRNA(Gln) + L-glutamine + ATP + H2O = L-glutaminyl-tRNA(Gln) + L-glutamate + ADP + phosphate + H(+). The catalysed reaction is L-aspartyl-tRNA(Asn) + L-glutamine + ATP + H2O = L-asparaginyl-tRNA(Asn) + L-glutamate + ADP + phosphate + 2 H(+). In terms of biological role, allows the formation of correctly charged Asn-tRNA(Asn) or Gln-tRNA(Gln) through the transamidation of misacylated Asp-tRNA(Asn) or Glu-tRNA(Gln) in organisms which lack either or both of asparaginyl-tRNA or glutaminyl-tRNA synthetases. The reaction takes place in the presence of glutamine and ATP through an activated phospho-Asp-tRNA(Asn) or phospho-Glu-tRNA(Gln). The polypeptide is Aspartyl/glutamyl-tRNA(Asn/Gln) amidotransferase subunit C (Rhodopseudomonas palustris (strain BisB18)).